The sequence spans 553 residues: Hydroxylamine reductase (553 aa).

Residues Cys-3, Cys-6, Cys-18, and Cys-25 each coordinate [2Fe-2S] cluster. The hybrid [4Fe-2O-2S] cluster site is built by His-252, Glu-276, Cys-320, Cys-408, Cys-436, Cys-461, Glu-495, and Lys-497. Residue Cys-408 is modified to Cysteine persulfide.

The protein belongs to the HCP family. [2Fe-2S] cluster is required as a cofactor. It depends on hybrid [4Fe-2O-2S] cluster as a cofactor.

The protein localises to the cytoplasm. It catalyses the reaction A + NH4(+) + H2O = hydroxylamine + AH2 + H(+). Functionally, catalyzes the reduction of hydroxylamine to form NH(3) and H(2)O. The polypeptide is Hydroxylamine reductase (Tolumonas auensis (strain DSM 9187 / NBRC 110442 / TA 4)).